The sequence spans 642 residues: Sterol O-acyltransferase 2 (642 aa).

A disordered region spans residues 174-194 (KSSPDAVDSVGKNDGAAPTTV). A phosphoserine mark is found at serine 175 and serine 176. The next 5 membrane-spanning stretches (helical) occupy residues 215–235 (FSGLYVAFWMAIAFGAVKALI), 292–312 (TGWIFTSIYEFLFVIFYMYLT), 404–424 (ISAKSFFWFTMFPTLIYQIEY), 442–462 (IFGTIFLMMIDAQILMYPVAM), and 485–505 (LLVDIVPGFIVMYILDFYLIW). Residues 523–529 (FYGDWWN) carry the FYXDWWN motif motif. A run of 2 helical transmembrane segments spans residues 567–587 (ATLMTFFLSSVVHELAMYVIF) and 622–642 (VIFWLGICMGPSVMCTLYLTF). Histidine 579 is a catalytic residue.

This sequence belongs to the membrane-bound acyltransferase family. Sterol o-acyltransferase subfamily.

It is found in the endoplasmic reticulum membrane. It carries out the reaction ergosterol + an acyl-CoA = ergosteryl ester + CoA. The enzyme catalyses zymosterol + an acyl-CoA = zymosterol ester + CoA. Functionally, sterol O-acyltransferase that catalyzes the formation of stery esters. This is Sterol O-acyltransferase 2 from Saccharomyces cerevisiae (strain ATCC 204508 / S288c) (Baker's yeast).